Consider the following 432-residue polypeptide: D-amino acid dehydrogenase (432 aa).

3–17 (VVILGSGVVGVTSAW) serves as a coordination point for FAD.

It belongs to the DadA oxidoreductase family. Requires FAD as cofactor.

The catalysed reaction is a D-alpha-amino acid + A + H2O = a 2-oxocarboxylate + AH2 + NH4(+). It participates in amino-acid degradation; D-alanine degradation; NH(3) and pyruvate from D-alanine: step 1/1. In terms of biological role, oxidative deamination of D-amino acids. This chain is D-amino acid dehydrogenase, found in Salmonella choleraesuis (strain SC-B67).